Here is a 292-residue protein sequence, read N- to C-terminus: MADKLFSIRNYFFLGSYQSCIGEALKFSSKNEEEKQEKDVYLYRSYIAQGQAFIPLKEIPAATKSADLAAVRRYAEFRNNPAAKKKILAEVQEEVASRNIKSEIAAVLAATILNEADLSQDAFRAVSRFEGLEARASKVFILIKMNKRKLAIGEVKKMNQIDEDATLSQLANALVTSFGASGKVKDALYIYSEMSDKYGRTTDLEMHQAVVSILTQDYAAAEELLESALERDNKDADVLINSIVSAQLNEKDDDVVERFISQLKHEHPNHPWVIDFNEKEAEFDRVASDSRA.

Belongs to the COPE family. As to quaternary structure, oligomeric complex that consists of at least the alpha, beta, beta', gamma, delta, epsilon and zeta subunits.

It is found in the cytoplasm. The protein localises to the golgi apparatus membrane. Its subcellular location is the cytoplasmic vesicle. It localises to the COPI-coated vesicle membrane. The coatomer is a cytosolic protein complex that binds to dilysine motifs and reversibly associates with Golgi non-clathrin-coated vesicles, which further mediate biosynthetic protein transport from the ER, via the Golgi up to the trans Golgi network. The coatomer complex is required for budding from Golgi membranes, and is essential for the retrograde Golgi-to-ER transport of dilysine-tagged proteins. The sequence is that of Coatomer subunit epsilon (cope-1) from Caenorhabditis elegans.